The sequence spans 168 residues: Cyanate hydratase (168 aa).

Residues Arg-91, Glu-94, and Ser-117 contribute to the active site.

It belongs to the cyanase family.

It carries out the reaction cyanate + hydrogencarbonate + 3 H(+) = NH4(+) + 2 CO2. Catalyzes the reaction of cyanate with bicarbonate to produce ammonia and carbon dioxide. This chain is Cyanate hydratase, found in Arabidopsis thaliana (Mouse-ear cress).